The sequence spans 283 residues: Nucleoid occlusion protein (283 aa).

The segment at 1–21 is disordered; that stretch reads MKHSFSRFFGFGEKEEEPEIA. The H-T-H motif DNA-binding region spans 148–167; that stretch reads EALAQRLGKGQSTIANKLRL.

This sequence belongs to the ParB family.

It is found in the cytoplasm. The protein localises to the nucleoid. Effects nucleoid occlusion by binding relatively nonspecifically to DNA and preventing the assembly of the division machinery in the vicinity of the nucleoid, especially under conditions that disturb the cell cycle. It helps to coordinate cell division and chromosome segregation by preventing the formation of the Z ring through the nucleoid, which would cause chromosome breakage. The protein is Nucleoid occlusion protein of Bacillus velezensis (strain DSM 23117 / BGSC 10A6 / LMG 26770 / FZB42) (Bacillus amyloliquefaciens subsp. plantarum).